The sequence spans 598 residues: Elongation factor 4 (598 aa).

The 183-residue stretch at 5 to 187 (ANIRNFSIIA…ALVEFIPAPT (183 aa)) folds into the tr-type G domain. GTP-binding positions include 17-22 (DHGKST) and 134-137 (NKID).

Belongs to the TRAFAC class translation factor GTPase superfamily. Classic translation factor GTPase family. LepA subfamily.

The protein localises to the cell inner membrane. The catalysed reaction is GTP + H2O = GDP + phosphate + H(+). Its function is as follows. Required for accurate and efficient protein synthesis under certain stress conditions. May act as a fidelity factor of the translation reaction, by catalyzing a one-codon backward translocation of tRNAs on improperly translocated ribosomes. Back-translocation proceeds from a post-translocation (POST) complex to a pre-translocation (PRE) complex, thus giving elongation factor G a second chance to translocate the tRNAs correctly. Binds to ribosomes in a GTP-dependent manner. The polypeptide is Elongation factor 4 (Psychrobacter cryohalolentis (strain ATCC BAA-1226 / DSM 17306 / VKM B-2378 / K5)).